The chain runs to 305 residues: Glyceraldehyde-3-phosphate dehydrogenase 2, cytosolic (305 aa).

NAD(+)-binding residues include aspartate 3 and arginine 50. Residues 121–123, threonine 152, 181–182, and arginine 204 contribute to the D-glyceraldehyde 3-phosphate site; these read SCT and TG. The active-site Nucleophile is the cysteine 122. Asparagine 286 provides a ligand contact to NAD(+).

Belongs to the glyceraldehyde-3-phosphate dehydrogenase family. As to quaternary structure, homotetramer.

It localises to the cytoplasm. The catalysed reaction is D-glyceraldehyde 3-phosphate + phosphate + NAD(+) = (2R)-3-phospho-glyceroyl phosphate + NADH + H(+). It participates in carbohydrate degradation; glycolysis; pyruvate from D-glyceraldehyde 3-phosphate: step 1/5. Its function is as follows. Key enzyme in glycolysis that catalyzes the first step of the pathway by converting D-glyceraldehyde 3-phosphate (G3P) into 3-phospho-D-glyceroyl phosphate. Essential for the maintenance of cellular ATP levels and carbohydrate metabolism. This chain is Glyceraldehyde-3-phosphate dehydrogenase 2, cytosolic (GAPC), found in Hordeum vulgare (Barley).